The chain runs to 662 residues: LIM domain kinase 1 (662 aa).

2 consecutive LIM zinc-binding domains span residues 24–83 (PVCA…RFGE) and 84–145 (LCHG…MVVT). Residues 166–259 (LVSIPACSDG…LLQLTIEHDP (94 aa)) form the PDZ domain. The disordered stretch occupies residues 262-328 (PLPRDLALPC…ASQRKDIGRS (67 aa)). The segment covering 272–287 (SPLPDPHSPLRSPVPA) has biased composition (pro residues). A compositionally biased stretch (low complexity) spans 309–320 (SPGSSSVGSPAS). Residues 346 to 611 (LIHGEVLGKG…PSFSKLEQWL (266 aa)) enclose the Protein kinase domain. ATP-binding positions include 352-360 (LGKGCFGQA) and K375. The active site involves D467.

It belongs to the protein kinase superfamily. TKL Ser/Thr protein kinase family. Expressed predominantly in the brain.

The protein resides in the cytoplasm. It is found in the nucleus. The protein localises to the cytoskeleton. It localises to the cell projection. Its subcellular location is the growth cone. The catalysed reaction is L-seryl-[protein] + ATP = O-phospho-L-seryl-[protein] + ADP + H(+). It catalyses the reaction L-threonyl-[protein] + ATP = O-phospho-L-threonyl-[protein] + ADP + H(+). Its function is as follows. Protein kinase which regulates actin filament dynamics. Phosphorylates and inactivates the actin binding/depolymerizing factor cofilin, thereby stabilizing the actin cytoskeleton. Required for motility of the axon growth cone. The chain is LIM domain kinase 1 (LIMK1) from Gallus gallus (Chicken).